Here is a 142-residue protein sequence, read N- to C-terminus: Transcriptional regulator MraZ (142 aa).

SpoVT-AbrB domains are found at residues 5–47 (NYQH…TNQE) and 76–119 (SLTV…DINA).

The protein belongs to the MraZ family. Forms oligomers.

It is found in the cytoplasm. The protein resides in the nucleoid. The sequence is that of Transcriptional regulator MraZ from Mycoplasmoides gallisepticum (strain R(low / passage 15 / clone 2)) (Mycoplasma gallisepticum).